The following is a 433-amino-acid chain: Trigger factor (433 aa).

Positions 163–248 (GNFVVIDFVG…VKEAKVKELP (86 aa)) constitute a PPIase FKBP-type domain.

Belongs to the FKBP-type PPIase family. Tig subfamily.

It localises to the cytoplasm. The catalysed reaction is [protein]-peptidylproline (omega=180) = [protein]-peptidylproline (omega=0). Involved in protein export. Acts as a chaperone by maintaining the newly synthesized protein in an open conformation. Functions as a peptidyl-prolyl cis-trans isomerase. This chain is Trigger factor, found in Geobacter metallireducens (strain ATCC 53774 / DSM 7210 / GS-15).